We begin with the raw amino-acid sequence, 391 residues long: Probable acridone synthase 4 (391 aa).

The active site involves Cys-164.

Belongs to the thiolase-like superfamily. Chalcone/stilbene synthases family.

It catalyses the reaction N-methylanthraniloyl-CoA + 3 malonyl-CoA + 3 H(+) = 1,3-dihydroxy-N-methylacridone + 3 CO2 + 4 CoA + H2O. This is Probable acridone synthase 4 (ACS4) from Ruta graveolens (Common rue).